We begin with the raw amino-acid sequence, 304 residues long: tRNA dimethylallyltransferase (304 aa).

Residue 13-20 participates in ATP binding; the sequence is GPTAAGKT. 15–20 is a binding site for substrate; the sequence is TAAGKT. Residues 38–41 are interaction with substrate tRNA; that stretch reads DSRQ.

Belongs to the IPP transferase family. Monomer. It depends on Mg(2+) as a cofactor.

The enzyme catalyses adenosine(37) in tRNA + dimethylallyl diphosphate = N(6)-dimethylallyladenosine(37) in tRNA + diphosphate. Its function is as follows. Catalyzes the transfer of a dimethylallyl group onto the adenine at position 37 in tRNAs that read codons beginning with uridine, leading to the formation of N6-(dimethylallyl)adenosine (i(6)A). This Cytophaga hutchinsonii (strain ATCC 33406 / DSM 1761 / CIP 103989 / NBRC 15051 / NCIMB 9469 / D465) protein is tRNA dimethylallyltransferase.